The primary structure comprises 637 residues: Biosynthetic arginine decarboxylase (637 aa).

An N6-(pyridoxal phosphate)lysine modification is found at K107. L289–Y299 is a binding site for substrate.

It belongs to the Orn/Lys/Arg decarboxylase class-II family. SpeA subfamily. Requires Mg(2+) as cofactor. The cofactor is pyridoxal 5'-phosphate.

It catalyses the reaction L-arginine + H(+) = agmatine + CO2. Functionally, catalyzes the biosynthesis of agmatine from arginine. The polypeptide is Biosynthetic arginine decarboxylase (Thermosynechococcus vestitus (strain NIES-2133 / IAM M-273 / BP-1)).